A 284-amino-acid chain; its full sequence is Aldo-keto reductase MAV_3816 (284 aa).

Catalysis depends on Tyr-59, which acts as the Proton donor. Positions 199, 237, 239, 240, 241, 248, and 275 each coordinate NADPH.

This sequence belongs to the aldo/keto reductase family.

In Mycobacterium avium (strain 104), this protein is Aldo-keto reductase MAV_3816.